The following is a 31-amino-acid chain: Cyclotide hyen-I (31 aa).

Positions 1 to 31 (GSTPCGESCVWIPCISGIVGCSCSNKVCYMD) form a cross-link, cyclopeptide (Gly-Asp). 3 cysteine pairs are disulfide-bonded: Cys5–Cys21, Cys9–Cys23, and Cys14–Cys28.

This is a cyclic peptide. Detected in seeds (at protein level).

Its function is as follows. Probably participates in a plant defense mechanism. The polypeptide is Cyclotide hyen-I (Pigea enneasperma (Spade flower)).